The primary structure comprises 704 residues: Elongation factor G (704 aa).

Residues 8-291 enclose the tr-type G domain; sequence DRVRNIGIMA…AVIDYLASPV (284 aa). Residues 17-24, 90-94, and 144-147 each bind GTP; these read AHIDAGKT, DTPGH, and NKMD.

Belongs to the TRAFAC class translation factor GTPase superfamily. Classic translation factor GTPase family. EF-G/EF-2 subfamily.

Its subcellular location is the cytoplasm. Functionally, catalyzes the GTP-dependent ribosomal translocation step during translation elongation. During this step, the ribosome changes from the pre-translocational (PRE) to the post-translocational (POST) state as the newly formed A-site-bound peptidyl-tRNA and P-site-bound deacylated tRNA move to the P and E sites, respectively. Catalyzes the coordinated movement of the two tRNA molecules, the mRNA and conformational changes in the ribosome. The chain is Elongation factor G from Chlorobaculum tepidum (strain ATCC 49652 / DSM 12025 / NBRC 103806 / TLS) (Chlorobium tepidum).